Reading from the N-terminus, the 188-residue chain is Elongation factor P (188 aa).

It belongs to the elongation factor P family.

The protein localises to the cytoplasm. The protein operates within protein biosynthesis; polypeptide chain elongation. Functionally, involved in peptide bond synthesis. Stimulates efficient translation and peptide-bond synthesis on native or reconstituted 70S ribosomes in vitro. Probably functions indirectly by altering the affinity of the ribosome for aminoacyl-tRNA, thus increasing their reactivity as acceptors for peptidyl transferase. The chain is Elongation factor P from Exiguobacterium sibiricum (strain DSM 17290 / CCUG 55495 / CIP 109462 / JCM 13490 / 255-15).